The chain runs to 339 residues: Serine/threonine-protein kinase SAPK2 (339 aa).

A Protein kinase domain is found at 4 to 260 (YEVIKDIGSG…IPEIKNHPWF (257 aa)). Residues 10-18 (IGSGNFGVA) and Lys-33 each bind ATP. The Proton acceptor role is filled by Asp-123. Residues 253-339 (EIKNHPWFLK…EDSGDFVCAL (87 aa)) form a C-terminal region.

This sequence belongs to the protein kinase superfamily. Ser/Thr protein kinase family. In terms of processing, phosphorylated.

It carries out the reaction L-seryl-[protein] + ATP = O-phospho-L-seryl-[protein] + ADP + H(+). The catalysed reaction is L-threonyl-[protein] + ATP = O-phospho-L-threonyl-[protein] + ADP + H(+). Its function is as follows. May play a role in signal transduction of hyperosmotic response. Can phosphorylate BZIP46 in vitro. This is Serine/threonine-protein kinase SAPK2 (SAPK2) from Oryza sativa subsp. indica (Rice).